A 185-amino-acid polypeptide reads, in one-letter code: uncharacterized protein (185 aa).

Positions 39-177 constitute a Nudix hydrolase domain; that stretch reads LWHASAGVLV…SWPFVPDSRA (139 aa). Residues 77 to 99 carry the Nudix box motif; that stretch reads GGVVDPGETPQETAIREVGEELG. Residues E93 and E97 each coordinate Mg(2+).

The protein belongs to the Nudix hydrolase family. The cofactor is Mg(2+).

This is an uncharacterized protein from Rhodococcus erythropolis (Arthrobacter picolinophilus).